We begin with the raw amino-acid sequence, 89 residues long: MALSLERKGEIIKTYQIHENDTGSPEVQIAILTERINYLNEHLKINSKDHHSRRGLLKMVGQRRSLLDYLKKKDFERYRSIVTRLGLRR.

It belongs to the universal ribosomal protein uS15 family. In terms of assembly, part of the 30S ribosomal subunit. Forms a bridge to the 50S subunit in the 70S ribosome, contacting the 23S rRNA.

In terms of biological role, one of the primary rRNA binding proteins, it binds directly to 16S rRNA where it helps nucleate assembly of the platform of the 30S subunit by binding and bridging several RNA helices of the 16S rRNA. Its function is as follows. Forms an intersubunit bridge (bridge B4) with the 23S rRNA of the 50S subunit in the ribosome. This Syntrophomonas wolfei subsp. wolfei (strain DSM 2245B / Goettingen) protein is Small ribosomal subunit protein uS15.